Consider the following 93-residue polypeptide: Defensin alpha 4 (93 aa).

The signal sequence occupies residues 1 to 19 (MRTLTLLITLLLLALHTQA). The propeptide occupies 20 to 62 (ESPQERAKAAPDQDMVMEDQDIFISFGGYKGTVLQDAVVKAGQ). Disulfide bonds link cysteine 64–cysteine 92, cysteine 66–cysteine 81, and cysteine 71–cysteine 91.

The protein belongs to the alpha-defensin family. In terms of tissue distribution, expressed in neutrophils (at protein level). Highest expression in bone marrow and to a much lesser extent in small intestine.

It localises to the secreted. In terms of biological role, host-defense peptide that has antimicrobial activity against Gram-positive and Gram-negative bacteria and fungi (in vitro). Exhibits activity against E.coli, A.calcoaceticus, S,aureus and C.albicans. In Rattus norvegicus (Rat), this protein is Defensin alpha 4.